Consider the following 184-residue polypeptide: MSSTGTTLSASEGDKGFRNGAAPAKSKSHSTIALLRLLAFAATLSAFVTMITNKQKITIGPFTRWSKWHYSDAFMWFVVANCIAFIYLLFAAILGLISHSPMLVKHLVILDLIVSYMLFSAASAATAVAYIGKNGISQPGWTAICGVFERYCHHVAGALVACFLGWLFLTIAVFLGMRRSPAAV.

The Cytoplasmic portion of the chain corresponds to 1-30; the sequence is MSSTGTTLSASEGDKGFRNGAAPAKSKSHS. Residues 31 to 51 traverse the membrane as a helical segment; the sequence is TIALLRLLAFAATLSAFVTMI. Residues 52–76 lie on the Extracellular side of the membrane; it reads TNKQKITIGPFTRWSKWHYSDAFMW. The helical transmembrane segment at 77-97 threads the bilayer; the sequence is FVVANCIAFIYLLFAAILGLI. The Cytoplasmic segment spans residues 98-111; it reads SHSPMLVKHLVILD. Residues 112-132 form a helical membrane-spanning segment; sequence LIVSYMLFSAASAATAVAYIG. At 133-154 the chain is on the extracellular side; sequence KNGISQPGWTAICGVFERYCHH. Residues 155–175 form a helical membrane-spanning segment; the sequence is VAGALVACFLGWLFLTIAVFL. The Cytoplasmic segment spans residues 176 to 184; the sequence is GMRRSPAAV.

The protein belongs to the Casparian strip membrane proteins (CASP) family. In terms of assembly, homodimer and heterodimers.

Its subcellular location is the cell membrane. The sequence is that of CASP-like protein 1U1 from Marchantia polymorpha (Common liverwort).